The following is a 384-amino-acid chain: Carbazole 1,9a-dioxygenase, terminal oxygenase component CarAa (384 aa).

Residues 29–135 (WYPVMFSKEI…VQEAKGCVFI (107 aa)) form the Rieske domain. C69, H71, C90, and H93 together coordinate [2Fe-2S] cluster.

In terms of assembly, homotrimer. Carbazole 1,9a-dioxygenase complex consists of a terminal oxygenase component CarAa, a ferredoxin reductase component CarAd and a ferredoxin component CarAc. It depends on [2Fe-2S] cluster as a cofactor.

The enzyme catalyses 9H-carbazole + NADH + O2 + H(+) = 2'-aminobiphenyl-2,3-diol + NAD(+). It catalyses the reaction 9H-carbazole + NADPH + O2 + H(+) = 2'-aminobiphenyl-2,3-diol + NADP(+). In terms of biological role, part of the multicomponent carbazole 1,9a-dioxygenase (CARDO), that converts carbazole (CAR) into 2-aminobiphenyl-2,3-diol. Catalyzes the dioxygenation at the angular (C-9a) and adjacent (C-1) positions of carbazole to yield a highly unstable cis-hydrodiol intermediate which is spontaneously converted to 2-aminobiphenyl-2,3-diol. It is also able to attack the angular position adjacent of hetero atom of heterocyclic aromatic compounds such as polychlorinated dibenzo-p-dioxin (DD) and dibenzofuran (DBF). It was also shown that CARDO has the ability to metabolize biphenyl and polycyclic aromatic hydrocarbons, such as naphthalene and phenanthrene. This is Carbazole 1,9a-dioxygenase, terminal oxygenase component CarAa (carAa) from Metapseudomonas resinovorans (Pseudomonas resinovorans).